The chain runs to 502 residues: uncharacterized protein (502 aa).

Residues 1–21 (MKIFLVFLSVFFFNGCFGLVY) traverse the membrane as a helical segment. 2 PLD phosphodiesterase domains span residues 162–189 (IKKR…GDNY) and 396–423 (TKHS…DPRS).

It belongs to the phospholipase D family. Cardiolipin synthase subfamily.

It is found in the cell membrane. This is an uncharacterized protein from Helicobacter pylori (strain ATCC 700392 / 26695) (Campylobacter pylori).